The sequence spans 319 residues: tRNA-cytidine(32) 2-sulfurtransferase (319 aa).

The short motif at 43-48 is the PP-loop motif element; that stretch reads SGGKDS. [4Fe-4S] cluster contacts are provided by cysteine 118, cysteine 121, and cysteine 209. The interval 272–297 is disordered; sequence DLAFDSEKMPERFSDGSEEDESEIKI. Positions 276–286 are enriched in basic and acidic residues; it reads DSEKMPERFSD.

The protein belongs to the TtcA family. As to quaternary structure, homodimer. It depends on Mg(2+) as a cofactor. Requires [4Fe-4S] cluster as cofactor.

The protein resides in the cytoplasm. The catalysed reaction is cytidine(32) in tRNA + S-sulfanyl-L-cysteinyl-[cysteine desulfurase] + AH2 + ATP = 2-thiocytidine(32) in tRNA + L-cysteinyl-[cysteine desulfurase] + A + AMP + diphosphate + H(+). It functions in the pathway tRNA modification. Functionally, catalyzes the ATP-dependent 2-thiolation of cytidine in position 32 of tRNA, to form 2-thiocytidine (s(2)C32). The sulfur atoms are provided by the cysteine/cysteine desulfurase (IscS) system. This is tRNA-cytidine(32) 2-sulfurtransferase from Neisseria gonorrhoeae (strain ATCC 700825 / FA 1090).